The chain runs to 373 residues: Probable di-N-acetylchitobiase 1 (373 aa).

The N-terminal stretch at M1 to S20 is a signal peptide. A GH18 domain is found at K21–F369. Residue N48 is glycosylated (N-linked (GlcNAc...) asparagine). Chitin-binding positions include P53 to Y54 and N82 to R85. An N-linked (GlcNAc...) asparagine glycan is attached at N99. The active-site Proton donor is the E127. Chitin-binding positions include Y128 and M191 to D194. N-linked (GlcNAc...) asparagine glycans are attached at residues N222, N250, N269, N279, and N288. W347 serves as a coordination point for chitin.

Belongs to the glycosyl hydrolase 18 family.

The protein resides in the lysosome. In terms of biological role, involved in the degradation of asparagine-linked glycoproteins. May hydrolyze of N-acetyl-beta-D-glucosamine (1-4)N-acetylglucosamine chitobiose core from the reducing end of the bond. This is Probable di-N-acetylchitobiase 1 (ctbs1) from Dictyostelium discoideum (Social amoeba).